A 506-amino-acid polypeptide reads, in one-letter code: Ubiquitin carboxyl-terminal hydrolase 22 (506 aa).

A UBP-type zinc finger spans residues 4–121 (AGCSHVNGFK…KEEQRKAWKL (118 aa)). Positions 6, 8, 46, 49, 59, 62, 67, 72, 76, 82, 95, and 98 each coordinate Zn(2+). Positions 159-501 (RGLINLGNTC…EGYLLFYHKQ (343 aa)) constitute a USP domain. Cys-168 acts as the Nucleophile in catalysis. Residue His-460 is the Proton acceptor of the active site.

The protein belongs to the peptidase C19 family. UBP8 subfamily. In terms of assembly, component of some SAGA transcription coactivator-HAT complexes.

It localises to the nucleus. The catalysed reaction is Thiol-dependent hydrolysis of ester, thioester, amide, peptide and isopeptide bonds formed by the C-terminal Gly of ubiquitin (a 76-residue protein attached to proteins as an intracellular targeting signal).. Its function is as follows. Histone deubiquitinating component of the transcription regulatory histone acetylation (HAT) complex SAGA. Catalyzes the deubiquitination of both histones H2A and H2B, thereby acting as a coactivator. Recruited to specific gene promoters by activators, where it is required for transcription. This is Ubiquitin carboxyl-terminal hydrolase 22 (usp22) from Danio rerio (Zebrafish).